The sequence spans 663 residues: F-box protein DAS1 (663 aa).

The F-box domain maps to 46 to 91 (VFPLTKLPDELMQEVFSHLPQPDRLQLCLVNKRLNKIATKLLYRRI).

In terms of assembly, interacts with SKP1. Component of the probable SCF(DAS1) complex containing CDC53, SKP1, RBX1 and DAS1.

It participates in protein modification; protein ubiquitination. Substrate recognition component of a SCF (SKP1-CUL1-F-box protein) E3 ubiquitin-protein ligase complex which mediates the ubiquitination and subsequent proteasomal degradation of target proteins. Probably recognizes and binds to phosphorylated target proteins. In Saccharomyces cerevisiae (strain ATCC 204508 / S288c) (Baker's yeast), this protein is F-box protein DAS1 (DAS1).